The chain runs to 89 residues: Peroxidase (89 aa).

His-52 is a binding site for heme. 2 residues coordinate Ca(2+): Thr-53 and Asp-68.

Heme b is required as a cofactor. The cofactor is Ca(2+).

It is found in the secreted. It carries out the reaction 2 a phenolic donor + H2O2 = 2 a phenolic radical donor + 2 H2O. Removal of H(2)O(2), oxidation of toxic reductants, biosynthesis and degradation of lignin, suberization, auxin catabolism, response to environmental stresses such as wounding, pathogen attack and oxidative stress. These functions might be dependent on each isozyme/isoform in each plant tissue. Active against p-coumaryl alcohol, coniferyl alcohol and coniferyl aldehyde. The protein is Peroxidase of Ginkgo biloba (Ginkgo).